Reading from the N-terminus, the 838-residue chain is Protein P (838 aa).

The segment at 1–177 is terminal protein domain (TP); sequence MPLSYQHFRK…FCGSPYSWEQ (177 aa). A spacer region spans residues 178-341; sequence ELQHQTSTRH…YCLTHIVNLL (164 aa). 2 disordered regions span residues 215–238 and 285–311; these read QSRL…SGSI and STSK…RSQS. The segment covering 285 to 294 has biased composition (polar residues); sequence STSKRQSSSG. The polymerase/reverse transcriptase domain (RT) stretch occupies residues 342 to 685; the sequence is EDWGPCTEHG…YLHLYPVARQ (344 aa). The region spanning 352 to 595 is the Reverse transcriptase domain; that stretch reads EHNIRIPRTP…YSLNFMGYVI (244 aa). Residues aspartate 424, aspartate 546, and aspartate 547 each contribute to the Mg(2+) site.

Belongs to the hepadnaviridae P protein family.

It catalyses the reaction DNA(n) + a 2'-deoxyribonucleoside 5'-triphosphate = DNA(n+1) + diphosphate. It carries out the reaction Endonucleolytic cleavage to 5'-phosphomonoester.. Its activity is regulated as follows. Activated by host HSP70 and HSP40 in vitro to be able to bind the epsilon loop of the pgRNA. Because deletion of the RNase H region renders the protein partly chaperone-independent, the chaperones may be needed indirectly to relieve occlusion of the RNA-binding site by this domain. Inhibited by several reverse-transcriptase inhibitors: Lamivudine, Adefovir and Entecavir. Multifunctional enzyme that converts the viral RNA genome into dsDNA in viral cytoplasmic capsids. This enzyme displays a DNA polymerase activity that can copy either DNA or RNA templates, and a ribonuclease H (RNase H) activity that cleaves the RNA strand of RNA-DNA heteroduplexes in a partially processive 3'- to 5'-endonucleasic mode. Neo-synthesized pregenomic RNA (pgRNA) are encapsidated together with the P protein, and reverse-transcribed inside the nucleocapsid. Initiation of reverse-transcription occurs first by binding the epsilon loop on the pgRNA genome, and is initiated by protein priming, thereby the 5'-end of (-)DNA is covalently linked to P protein. Partial (+)DNA is synthesized from the (-)DNA template and generates the relaxed circular DNA (RC-DNA) genome. After budding and infection, the RC-DNA migrates in the nucleus, and is converted into a plasmid-like covalently closed circular DNA (cccDNA). The activity of P protein does not seem to be necessary for cccDNA generation, and is presumably released from (+)DNA by host nuclear DNA repair machinery. This chain is Protein P, found in Homo sapiens (Human).